We begin with the raw amino-acid sequence, 529 residues long: DNA-binding protein (529 aa).

The segment covering 1-17 (MASREEEQRETTPERGR) has biased composition (basic and acidic residues). Disordered stretches follow at residues 1 to 108 (MASR…VDSE) and 125 to 168 (PVLI…SEST). Residues 129-139 (KHGKGGKRTVR) show a composition bias toward basic residues. Residues 140 to 155 (RLNEDDPVARGMRTQE) show a composition bias toward basic and acidic residues. The segment covering 156-165 (EKEESSEAES) has biased composition (acidic residues). Phosphotyrosine; by host is present on tyrosine 195. Positions 284 and 286 each coordinate Zn(2+). The flexible loop stretch occupies residues 297-331 (IEMDVTSENGQRALKEQSSKAKIVKNRWGRNVVQI). Zn(2+) is bound by residues cysteine 339, cysteine 355, cysteine 396, cysteine 398, cysteine 450, and cysteine 467. The interval 513 to 529 (VSLPVAHSDARQNPFDF) is C-terminal arm, DBP binding.

Belongs to the adenoviridae E2A DNA-binding protein family. As to quaternary structure, homomultimerizes on viral ssDNA bound to pTP. Forms an initiation complex with viral polymerase, pTP and hosts NFIA and POU2F1/OCT1. Interacts with host SRCAP.

It is found in the host nucleus. Its function is as follows. Plays a role in the elongation phase of viral strand displacement replication by unwinding the template in an ATP-independent fashion, employing its capacity to form multimers. Also enhances the rate of initiation. Released from template upon second strand synthesis. Assembles in complex with viral pTP, viral pol, host NFIA and host POU2F1/OCT1 on viral origin of replication. Covers the whole ssDNA genome during synthesis. The complementary strand synthesis induces its release from DNA template. May inhibit cellular transcription mediated by the interaction between host SRCAP and CBP. The polypeptide is DNA-binding protein (Human adenovirus C serotype 2 (HAdV-2)).